The primary structure comprises 388 residues: Succinate--CoA ligase [ADP-forming] subunit beta (388 aa).

One can recognise an ATP-grasp domain in the interval 9 to 244 (KEILRKYNVP…LDEEDANEIE (236 aa)). Residues K46, 53–55 (GRG), E99, A102, and E107 each bind ATP. The Mg(2+) site is built by N199 and D213. Residues N264 and 321 to 323 (GIM) contribute to the substrate site.

This sequence belongs to the succinate/malate CoA ligase beta subunit family. Heterotetramer of two alpha and two beta subunits. Mg(2+) is required as a cofactor.

The enzyme catalyses succinate + ATP + CoA = succinyl-CoA + ADP + phosphate. The catalysed reaction is GTP + succinate + CoA = succinyl-CoA + GDP + phosphate. Its pathway is carbohydrate metabolism; tricarboxylic acid cycle; succinate from succinyl-CoA (ligase route): step 1/1. Its function is as follows. Succinyl-CoA synthetase functions in the citric acid cycle (TCA), coupling the hydrolysis of succinyl-CoA to the synthesis of either ATP or GTP and thus represents the only step of substrate-level phosphorylation in the TCA. The beta subunit provides nucleotide specificity of the enzyme and binds the substrate succinate, while the binding sites for coenzyme A and phosphate are found in the alpha subunit. The polypeptide is Succinate--CoA ligase [ADP-forming] subunit beta (Cupriavidus necator (strain ATCC 17699 / DSM 428 / KCTC 22496 / NCIMB 10442 / H16 / Stanier 337) (Ralstonia eutropha)).